The chain runs to 364 residues: UDP-N-acetylglucosamine--N-acetylmuramyl-(pentapeptide) pyrophosphoryl-undecaprenol N-acetylglucosamine transferase (364 aa).

Residues 13–15 (TGG), Asn-125, Arg-165, Ser-192, and Gln-293 each bind UDP-N-acetyl-alpha-D-glucosamine.

Belongs to the glycosyltransferase 28 family. MurG subfamily.

The protein resides in the cell inner membrane. It catalyses the reaction di-trans,octa-cis-undecaprenyl diphospho-N-acetyl-alpha-D-muramoyl-L-alanyl-D-glutamyl-meso-2,6-diaminopimeloyl-D-alanyl-D-alanine + UDP-N-acetyl-alpha-D-glucosamine = di-trans,octa-cis-undecaprenyl diphospho-[N-acetyl-alpha-D-glucosaminyl-(1-&gt;4)]-N-acetyl-alpha-D-muramoyl-L-alanyl-D-glutamyl-meso-2,6-diaminopimeloyl-D-alanyl-D-alanine + UDP + H(+). The protein operates within cell wall biogenesis; peptidoglycan biosynthesis. In terms of biological role, cell wall formation. Catalyzes the transfer of a GlcNAc subunit on undecaprenyl-pyrophosphoryl-MurNAc-pentapeptide (lipid intermediate I) to form undecaprenyl-pyrophosphoryl-MurNAc-(pentapeptide)GlcNAc (lipid intermediate II). This is UDP-N-acetylglucosamine--N-acetylmuramyl-(pentapeptide) pyrophosphoryl-undecaprenol N-acetylglucosamine transferase from Cereibacter sphaeroides (strain ATCC 17029 / ATH 2.4.9) (Rhodobacter sphaeroides).